The chain runs to 184 residues: Large ribosomal subunit protein uL6 (184 aa).

This sequence belongs to the universal ribosomal protein uL6 family. As to quaternary structure, part of the 50S ribosomal subunit.

Functionally, this protein binds to the 23S rRNA, and is important in its secondary structure. It is located near the subunit interface in the base of the L7/L12 stalk, and near the tRNA binding site of the peptidyltransferase center. The chain is Large ribosomal subunit protein uL6 from Pyrococcus furiosus (strain ATCC 43587 / DSM 3638 / JCM 8422 / Vc1).